We begin with the raw amino-acid sequence, 477 residues long: UDP-N-acetylmuramate--L-alanine ligase (477 aa).

Position 112–118 (112–118 (GTHGKTT)) interacts with ATP.

It belongs to the MurCDEF family.

It localises to the cytoplasm. The catalysed reaction is UDP-N-acetyl-alpha-D-muramate + L-alanine + ATP = UDP-N-acetyl-alpha-D-muramoyl-L-alanine + ADP + phosphate + H(+). Its pathway is cell wall biogenesis; peptidoglycan biosynthesis. Functionally, cell wall formation. This Cupriavidus necator (strain ATCC 17699 / DSM 428 / KCTC 22496 / NCIMB 10442 / H16 / Stanier 337) (Ralstonia eutropha) protein is UDP-N-acetylmuramate--L-alanine ligase.